A 348-amino-acid polypeptide reads, in one-letter code: Glucose 1-dehydrogenase 2 (348 aa).

Cys39 lines the Zn(2+) pocket. Thr41 lines the substrate pocket. Positions 64 and 65 each coordinate Zn(2+). Positions 110 and 146 each coordinate substrate. Glu146 is a Zn(2+) binding site. NADP(+) contacts are provided by residues 178-181 (AGPV), 260-262 (LGV), and 289-291 (SVN). Residue Asn291 coordinates substrate.

This sequence belongs to the zinc-containing alcohol dehydrogenase family. Glucose 1-dehydrogenase subfamily. Requires Zn(2+) as cofactor.

The enzyme catalyses D-glucose + NAD(+) = D-glucono-1,5-lactone + NADH + H(+). It carries out the reaction D-glucose + NADP(+) = D-glucono-1,5-lactone + NADPH + H(+). Functionally, catalyzes the NAD(P)(+)-dependent oxidation of D-glucose to D-gluconate via gluconolactone. Can utilize both NAD(+) and NADP(+) as electron acceptor. Is involved in the degradation of glucose through a non-phosphorylative variant of the Entner-Doudoroff pathway. The sequence is that of Glucose 1-dehydrogenase 2 from Vulcanisaeta moutnovskia (strain 768-28).